The primary structure comprises 109 residues: U4-lycotoxin-Ls1a (109 aa).

An N-terminal signal peptide occupies residues 1-22 (MKVLVLFSVLFLTLFSYSSTEA). A propeptide spanning residues 23–44 (IDELDSDAEEDMLSLMANEQVR) is cleaved from the precursor. A knottin domain region spans residues 45 to 88 (AKACTPRLHDCSHDRHSCCRGELFKDVCYCFYPEGEDKTEVCSC). 4 cysteine pairs are disulfide-bonded: Cys48/Cys63, Cys55/Cys72, Cys62/Cys88, and Cys74/Cys86. Positions 89-108 (QQPKSHKYIEKVVDKAKTVV) are linear cationic cytotoxin domain.

This sequence belongs to the neurotoxin 19 (CSTX) family. 05 (U4-Lctx) subfamily. As to expression, expressed by the venom gland.

It is found in the secreted. In terms of biological role, enhances the high-affinity desensitization of human P2RX3 purinoceptors. This Lycosa singoriensis (Wolf spider) protein is U4-lycotoxin-Ls1a.